A 249-amino-acid polypeptide reads, in one-letter code: Small ribosomal subunit protein uS4m (249 aa).

The S4 RNA-binding domain occupies arginine 133 to glutamine 193.

Belongs to the universal ribosomal protein uS4 family.

It localises to the mitochondrion. In Reclinomonas americana, this protein is Small ribosomal subunit protein uS4m (RPS4).